The chain runs to 178 residues: Peptidyl-prolyl cis-trans isomerase (178 aa).

A signal peptide spans 1–17; it reads MKLLFFFLVLAVSAAVA. In terms of domain architecture, PPIase cyclophilin-type spans 26 to 177; that stretch reads FMDIEIDGES…KIAKITDIGL (152 aa).

The protein belongs to the cyclophilin-type PPIase family. PPIase A subfamily.

The catalysed reaction is [protein]-peptidylproline (omega=180) = [protein]-peptidylproline (omega=0). PPIases accelerate the folding of proteins. It catalyzes the cis-trans isomerization of proline imidic peptide bonds in oligopeptides. Up-regulates interferon gamma production by bovine T-cells. Stimulates high levels of IFN-gamma production by peripheral blood mononuclear cells and T-cells. The IFN-gamma-inducing effect is blocked by cyclosporin A (CsA). This Neospora caninum (Coccidian parasite) protein is Peptidyl-prolyl cis-trans isomerase.